A 141-amino-acid chain; its full sequence is Large ribosomal subunit protein uL16 (141 aa).

The segment at M1 to A21 is disordered.

It belongs to the universal ribosomal protein uL16 family. In terms of assembly, part of the 50S ribosomal subunit.

Binds 23S rRNA and is also seen to make contacts with the A and possibly P site tRNAs. In Roseiflexus castenholzii (strain DSM 13941 / HLO8), this protein is Large ribosomal subunit protein uL16.